Here is a 321-residue protein sequence, read N- to C-terminus: Phospho-N-acetylmuramoyl-pentapeptide-transferase (321 aa).

Transmembrane regions (helical) follow at residues 1–21 (MIFV…PVLI), 50–70 (MGGL…IIFV), 76–96 (IILL…DDYI), 112–132 (FLAQ…FHLV), 140–160 (IPFT…IVFL), 176–196 (GLAT…SFVL), 200–220 (AIGI…PYNI), 225–245 (VFMG…ISIM), 250–270 (LSLI…MLQV), and 300–320 (VVTV…WIGV).

The protein belongs to the glycosyltransferase 4 family. MraY subfamily. It depends on Mg(2+) as a cofactor.

The protein localises to the cell membrane. It carries out the reaction UDP-N-acetyl-alpha-D-muramoyl-L-alanyl-gamma-D-glutamyl-L-lysyl-D-alanyl-D-alanine + di-trans,octa-cis-undecaprenyl phosphate = Mur2Ac(oyl-L-Ala-gamma-D-Glu-L-Lys-D-Ala-D-Ala)-di-trans,octa-cis-undecaprenyl diphosphate + UMP. Its pathway is cell wall biogenesis; peptidoglycan biosynthesis. Catalyzes the initial step of the lipid cycle reactions in the biosynthesis of the cell wall peptidoglycan: transfers peptidoglycan precursor phospho-MurNAc-pentapeptide from UDP-MurNAc-pentapeptide onto the lipid carrier undecaprenyl phosphate, yielding undecaprenyl-pyrophosphoryl-MurNAc-pentapeptide, known as lipid I. This chain is Phospho-N-acetylmuramoyl-pentapeptide-transferase, found in Staphylococcus aureus (strain bovine RF122 / ET3-1).